A 431-amino-acid polypeptide reads, in one-letter code: 4-hydroxy-3-methylbut-2-en-1-yl diphosphate synthase (flavodoxin) (431 aa).

Residues 1–21 (MNKLENPSQRDVAGPSPRHKT) form a disordered region. The [4Fe-4S] cluster site is built by cysteine 310, cysteine 313, cysteine 356, and glutamate 363.

It belongs to the IspG family. Requires [4Fe-4S] cluster as cofactor.

The enzyme catalyses (2E)-4-hydroxy-3-methylbut-2-enyl diphosphate + oxidized [flavodoxin] + H2O + 2 H(+) = 2-C-methyl-D-erythritol 2,4-cyclic diphosphate + reduced [flavodoxin]. It functions in the pathway isoprenoid biosynthesis; isopentenyl diphosphate biosynthesis via DXP pathway; isopentenyl diphosphate from 1-deoxy-D-xylulose 5-phosphate: step 5/6. In terms of biological role, converts 2C-methyl-D-erythritol 2,4-cyclodiphosphate (ME-2,4cPP) into 1-hydroxy-2-methyl-2-(E)-butenyl 4-diphosphate. In Nitrobacter hamburgensis (strain DSM 10229 / NCIMB 13809 / X14), this protein is 4-hydroxy-3-methylbut-2-en-1-yl diphosphate synthase (flavodoxin).